A 270-amino-acid polypeptide reads, in one-letter code: Gap junction beta-3 protein (270 aa).

The Cytoplasmic portion of the chain corresponds to 1–20 (MDWKKLQDLLSGVNQYSTAF). A helical transmembrane segment spans residues 21–40 (GRIWLSVVFVFRVLVYVVAA). Over 41 to 75 (ERVWGDEQKDFDCNTRQPGCTNVCYDNFFPISNIR) the chain is Extracellular. Residues 76–98 (LWALQLIFVTCPSMLVILHVAYR) form a helical membrane-spanning segment. Topologically, residues 99–126 (EERERKHRQKHGEQCAKLYSHPGKKHGG) are cytoplasmic. A helical membrane pass occupies residues 127-149 (LWWTYLFSLIFKLIIELVFLYVL). At 150–188 (HTLWHGFTMPRLVQCASIVPCPNTVDCYIARPTEKKVFT) the chain is on the extracellular side. The helical transmembrane segment at 189 to 211 (YFMVGASAVCIILTICEICYLIF) threads the bilayer. Over 212-270 (HRIMRGISKGKSTKSISSPKSSSRASTCRCHHKLLESGDPEADPASEKLQASAPSLTPI) the chain is Cytoplasmic. The interval 246–270 (LESGDPEADPASEKLQASAPSLTPI) is disordered.

It belongs to the connexin family. Beta-type (group I) subfamily. A connexon is composed of a hexamer of connexins. Interacts with CNST.

Its subcellular location is the cell membrane. The protein resides in the cell junction. It is found in the gap junction. In terms of biological role, one gap junction consists of a cluster of closely packed pairs of transmembrane channels, the connexons, through which materials of low MW diffuse from one cell to a neighboring cell. This is Gap junction beta-3 protein (Gjb3) from Mus musculus (Mouse).